A 362-amino-acid chain; its full sequence is L-arginine:L-lysine amidinotransferase (362 aa).

Active-site residues include Asp-195 and His-244. Catalysis depends on Cys-346, which acts as the Amidino-cysteine intermediate.

Belongs to the amidinotransferase family.

It catalyses the reaction L-lysine + L-arginine = L-homoarginine + L-ornithine. It carries out the reaction L-canavanine + L-ornithine = L-canaline + L-arginine + H(+). Functionally, involved in the biosynthesis of phaseolotoxin, a nonhost-specific toxin which is a key component in the development of the halo blight disease of beans. Catalyzes the transfer of an amidino group from arginine to lysine to produce one molecule of homoarginine and one molecule of ornithine, both being precursors in the biosynthesis of phaseolotoxin. Can also use L-canavanine as an alternative amidine donor with L-ornithine as amidine acceptor. The sequence is that of L-arginine:L-lysine amidinotransferase from Pseudomonas savastanoi pv. phaseolicola (Pseudomonas syringae pv. phaseolicola).